A 270-amino-acid polypeptide reads, in one-letter code: Small ribosomal subunit protein uS2 (270 aa).

Belongs to the universal ribosomal protein uS2 family. As to quaternary structure, component of the small ribosomal subunit. Mature ribosomes consist of a small (40S) and a large (60S) subunit. The 40S subunit contains about 33 different proteins and 1 molecule of RNA (18S). The 60S subunit contains about 49 different proteins and 3 molecules of RNA (28S, 5.8S and 5S). Interacts with oho23B/rpS21.

The protein resides in the cytoplasm. Its subcellular location is the nucleus. In terms of biological role, required for the assembly and/or stability of the 40S ribosomal subunit. Required for the processing of the 20S rRNA-precursor to mature 18S rRNA in a late step of the maturation of 40S ribosomal subunits. Required during oogenesis and imaginal development. The chain is Small ribosomal subunit protein uS2 from Drosophila persimilis (Fruit fly).